The primary structure comprises 228 residues: Adenosylcobinamide-GDP ribazoletransferase (228 aa).

6 helical membrane passes run 24 to 44 (VWML…ILYL), 50 to 70 (NVLS…DGLA), 96 to 116 (IAGT…LFSA), 117 to 137 (PFYS…LALA), 159 to 176 (VFLG…ILLY), and 181 to 198 (IFAL…KISL).

It belongs to the CobS family. It depends on Mg(2+) as a cofactor.

It is found in the cell membrane. It carries out the reaction alpha-ribazole + adenosylcob(III)inamide-GDP = adenosylcob(III)alamin + GMP + H(+). It catalyses the reaction alpha-ribazole 5'-phosphate + adenosylcob(III)inamide-GDP = adenosylcob(III)alamin 5'-phosphate + GMP + H(+). It participates in cofactor biosynthesis; adenosylcobalamin biosynthesis; adenosylcobalamin from cob(II)yrinate a,c-diamide: step 7/7. Functionally, joins adenosylcobinamide-GDP and alpha-ribazole to generate adenosylcobalamin (Ado-cobalamin). Also synthesizes adenosylcobalamin 5'-phosphate from adenosylcobinamide-GDP and alpha-ribazole 5'-phosphate. The chain is Adenosylcobinamide-GDP ribazoletransferase from Pyrococcus furiosus (strain ATCC 43587 / DSM 3638 / JCM 8422 / Vc1).